The chain runs to 116 residues: Endoribonuclease toxin ChpB (116 aa).

This sequence belongs to the PemK/MazF family. In terms of assembly, homodimer, interacts with ChpS, which inhibits the endoribonuclease activity.

With respect to regulation, stimulated in vitro in a concentration-dependent fashion by extracellular death factor (EDF, a quorum sensing pentapeptide sequence NNWNN, probably produced from the zwf gene product glucose-6-phosphate 1-dehydrogenase), which is able to overcome inhibition by cognate antitoxin ChpS. Functionally, toxic component of a type II toxin-antitoxin (TA) system. ChpB is a sequence-specific mRNA and (weak) tmRNA endoribonuclease that inhibits protein synthesis and induces bacterial stasis. Cleavage is independent of the ribosome. Cleavage occurs at ACY sequences where Y is not C. The endoribonuclease activity is not as strong as that of MazF. The endoribonuclease activity (a toxin) is inhibited by its labile cognate antitoxin ChpS. Toxicity results when the levels of ChpS decrease in the cell, leading to mRNA degradation. Both ChpS and ChpB probably bind to the promoter region of the chpS-chpB operon to autoregulate their synthesis. This chain is Endoribonuclease toxin ChpB (chpB), found in Escherichia coli (strain K12).